Consider the following 539-residue polypeptide: Tripartite motif-containing protein 26 (539 aa).

An RING-type zinc finger spans residues cysteine 16 to lysine 57. The B box-type zinc-finger motif lies at glutamine 97–methionine 138. The Zn(2+) site is built by cysteine 102, histidine 105, cysteine 124, and histidine 130. The stretch at isoleucine 188 to arginine 227 forms a coiled coil. Residues arginine 295 to proline 539 enclose the B30.2/SPRY domain. Residues arginine 376–cysteine 437 form a disordered region. Residues serine 380–leucine 434 are compositionally biased toward acidic residues.

It belongs to the TRIM/RBCC family. Interacts with TBK1; this interaction bridges together TBK1 and NEMO in order to activate TBK1. Interacts with INCA1. In terms of processing, autoubiquitinates upon viral infection. In turn, autoubiquitinated TRIM26 recruits NEMO and bridges TBK1-NEMO interaction.

It localises to the cytoplasm. The protein resides in the nucleus. It carries out the reaction S-ubiquitinyl-[E2 ubiquitin-conjugating enzyme]-L-cysteine + [acceptor protein]-L-lysine = [E2 ubiquitin-conjugating enzyme]-L-cysteine + N(6)-ubiquitinyl-[acceptor protein]-L-lysine.. E3 ubiquitin-protein ligase which regulates the IFN-beta production and antiviral response downstream of various DNA-encoded pattern-recognition receptors (PRRs). Also plays a central role in determining the response to different forms of oxidative stress by controlling levels of DNA glycosylases NEIL1, NEIL3 and NTH1 that are involved in repair of damaged DNA. Promotes nuclear IRF3 ubiquitination and proteasomal degradation. Bridges together TBK1 and NEMO during the innate response to viral infection leading to the activation of TBK1. Positively regulates LPS-mediated inflammatory innate immune response by catalyzing the 'Lys-11'-linked polyubiquitination of TAB1 to enhance its activation and subsequent NF-kappa-B and MAPK signaling. In a manner independent of its catalytic activity, inhibits WWP2, a SOX2-directed E3 ubiquitin ligase, and thus protects SOX2 from polyubiquitination and proteasomal degradation. Ubiquitinates the histone acetyltransferase protein complex component PHF20 and thereby triggers its degradation in the nucleus after its recruitment by the histone demethylase KDM6B, serving as a scaffold protein. Upon induction by TGF-beta, ubiquitinates the TFIID component TAF7 for proteasomal degradation. Induces ferroptosis by ubiquitinating SLC7A11, a critical protein for lipid reactive oxygen species (ROS) scavenging. This chain is Tripartite motif-containing protein 26 (TRIM26), found in Pan troglodytes (Chimpanzee).